A 419-amino-acid polypeptide reads, in one-letter code: Creatine kinase S-type, mitochondrial (419 aa).

The N-terminal 39 residues, 1 to 39 (MASAFSKLLTGRNASLLFTTLGTSALTTGYLLNRQKVSA), are a transit peptide targeting the mitochondrion. Residues 40 to 64 (DAREQHKLFPPSADYPDLRKHNNCM) form a cardiolipin-binding region. The Phosphagen kinase N-terminal domain maps to 46–132 (KLFPPSADYP…FDPVIKLRHN (87 aa)). The Phosphagen kinase C-terminal domain occupies 159–401 (YVLSSRVRTG…NYLVDCEKKL (243 aa)). Residues 162-166 (SSRVR) and H225 contribute to the ATP site. Y255 is subject to Phosphotyrosine. ATP is bound by residues R270, R326, 354–359 (RGTGGV), and D369. The residue at position 356 (T356) is a Phosphothreonine.

Belongs to the ATP:guanido phosphotransferase family. In terms of assembly, exists as an octamer composed of four CKMT2 homodimers.

It is found in the mitochondrion inner membrane. The enzyme catalyses creatine + ATP = N-phosphocreatine + ADP + H(+). Functionally, reversibly catalyzes the transfer of phosphate between ATP and various phosphogens (e.g. creatine phosphate). Creatine kinase isoenzymes play a central role in energy transduction in tissues with large, fluctuating energy demands, such as skeletal muscle, heart, brain and spermatozoa. The polypeptide is Creatine kinase S-type, mitochondrial (Ckmt2) (Mus musculus (Mouse)).